The sequence spans 198 residues: MRLVLASQSPSRLSILRGAGVEPVIAPAHVDERAIEERLAGAEPAEIVCALAAAKAEAIAPDYPEDVVVGGDSMLLLDGSLQGKPHTPEATVERWHAQAGRAAELITGHCVLYGEERFVEASRTTVHFAQASDADIEAYARTGEPLECAGAFTLEALGGWFIDRIEGDPSSVIGLSLPVLRRALYSFGLNVSEFWAQH.

Residue aspartate 72 is the Proton acceptor of the active site.

This sequence belongs to the Maf family. It depends on a divalent metal cation as a cofactor.

It is found in the cytoplasm. The catalysed reaction is a ribonucleoside 5'-triphosphate + H2O = a ribonucleoside 5'-phosphate + diphosphate + H(+). It catalyses the reaction a 2'-deoxyribonucleoside 5'-triphosphate + H2O = a 2'-deoxyribonucleoside 5'-phosphate + diphosphate + H(+). In terms of biological role, nucleoside triphosphate pyrophosphatase. May have a dual role in cell division arrest and in preventing the incorporation of modified nucleotides into cellular nucleic acids. The polypeptide is Nucleoside triphosphate pyrophosphatase (Corynebacterium aurimucosum (strain ATCC 700975 / DSM 44827 / CIP 107346 / CN-1) (Corynebacterium nigricans)).